Reading from the N-terminus, the 70-residue chain is Large ribosomal subunit protein bL31 (70 aa).

Positions 16, 18, 37, and 40 each coordinate Zn(2+).

This sequence belongs to the bacterial ribosomal protein bL31 family. Type A subfamily. In terms of assembly, part of the 50S ribosomal subunit. The cofactor is Zn(2+).

Functionally, binds the 23S rRNA. The protein is Large ribosomal subunit protein bL31 of Erwinia tasmaniensis (strain DSM 17950 / CFBP 7177 / CIP 109463 / NCPPB 4357 / Et1/99).